The following is a 335-amino-acid chain: Glyceraldehyde-3-phosphate dehydrogenase (335 aa).

NAD(+) contacts are provided by residues 11–12 (TI) and glycine 110. 139–141 (SCN) lines the D-glyceraldehyde 3-phosphate pocket. The Nucleophile role is filled by cysteine 140. Arginine 168 provides a ligand contact to NAD(+). Residue 194–195 (HG) coordinates D-glyceraldehyde 3-phosphate. Glutamine 301 contributes to the NAD(+) binding site.

The protein belongs to the glyceraldehyde-3-phosphate dehydrogenase family. As to quaternary structure, homotetramer.

Its subcellular location is the cytoplasm. The catalysed reaction is D-glyceraldehyde 3-phosphate + phosphate + NADP(+) = (2R)-3-phospho-glyceroyl phosphate + NADPH + H(+). It carries out the reaction D-glyceraldehyde 3-phosphate + phosphate + NAD(+) = (2R)-3-phospho-glyceroyl phosphate + NADH + H(+). The protein operates within carbohydrate degradation; glycolysis; pyruvate from D-glyceraldehyde 3-phosphate: step 1/5. The polypeptide is Glyceraldehyde-3-phosphate dehydrogenase (Halobacterium salinarum (strain ATCC 29341 / DSM 671 / R1)).